Here is a 169-residue protein sequence, read N- to C-terminus: Ribosome maturation factor RimP (169 aa).

This sequence belongs to the RimP family.

It localises to the cytoplasm. Its function is as follows. Required for maturation of 30S ribosomal subunits. This Pseudomonas putida (strain W619) protein is Ribosome maturation factor RimP.